The chain runs to 217 residues: MLAGQLEARDPKEGTHPEDPCPGAGAVTEKTAVAAEVLTEDCNAGEMPPLQQQVIRLHQELGRQKSLWADVHGKLRSHIDALREQNMELREKLRALQLQRWKARKKSAASPHAGQESHTLALEPAFGKMSPLSADEETIPKYIGRKNQSATLLGQFSSSKGDPLCLSSPMSLKIERISSWKTPPQEKRDKSLSRRRQDRRATPTGRPTPCAERRGGV.

The tract at residues 1 to 26 is disordered; sequence MLAGQLEARDPKEGTHPEDPCPGAGA. Basic and acidic residues predominate over residues 7–19; it reads EARDPKEGTHPED. Residues 69 to 110 adopt a coiled-coil conformation; it reads ADVHGKLRSHIDALREQNMELREKLRALQLQRWKARKKSAAS. The tract at residues 75–96 is leucine-zipper; sequence LRSHIDALREQNMELREKLRAL. Over residues 175-192 the composition is skewed to basic and acidic residues; that stretch reads ERISSWKTPPQEKRDKSL. Residues 175–217 form a disordered region; that stretch reads ERISSWKTPPQEKRDKSLSRRRQDRRATPTGRPTPCAERRGGV.

It belongs to the TCP10 family. Self-associates (via leucine zipper). Interacts (via leucine zipper) with ZIPK/DAPK3 (via leucine zipper). Interacts with MAD4.

Its subcellular location is the nucleus. Its function is as follows. May be involved in transcriptional regulation. Has in vitro transcription inhibition activity. The protein is T-complex protein 10A homolog 1 (TCP10L) of Pan troglodytes (Chimpanzee).